Here is a 281-residue protein sequence, read N- to C-terminus: Diaminopimelate epimerase (281 aa).

Substrate-binding residues include N13 and N66. C75 functions as the Proton donor in the catalytic mechanism. Substrate-binding positions include 76-77 (GN), N164, N197, and 215-216 (ER). C224 acts as the Proton acceptor in catalysis. 225–226 (GT) provides a ligand contact to substrate.

The protein belongs to the diaminopimelate epimerase family. In terms of assembly, homodimer.

It is found in the cytoplasm. It catalyses the reaction (2S,6S)-2,6-diaminopimelate = meso-2,6-diaminopimelate. The protein operates within amino-acid biosynthesis; L-lysine biosynthesis via DAP pathway; DL-2,6-diaminopimelate from LL-2,6-diaminopimelate: step 1/1. In terms of biological role, catalyzes the stereoinversion of LL-2,6-diaminopimelate (L,L-DAP) to meso-diaminopimelate (meso-DAP), a precursor of L-lysine and an essential component of the bacterial peptidoglycan. The chain is Diaminopimelate epimerase from Picosynechococcus sp. (strain ATCC 27264 / PCC 7002 / PR-6) (Agmenellum quadruplicatum).